Reading from the N-terminus, the 274-residue chain is tRNA pseudouridine synthase A (274 aa).

Asp51 functions as the Nucleophile in the catalytic mechanism. Residue Tyr109 participates in substrate binding.

Belongs to the tRNA pseudouridine synthase TruA family. As to quaternary structure, homodimer.

The catalysed reaction is uridine(38/39/40) in tRNA = pseudouridine(38/39/40) in tRNA. Functionally, formation of pseudouridine at positions 38, 39 and 40 in the anticodon stem and loop of transfer RNAs. The protein is tRNA pseudouridine synthase A of Acidovorax sp. (strain JS42).